The primary structure comprises 339 residues: Serpentine receptor class r-10 (339 aa).

At 1–11 (MSGELWITLVD) the chain is on the extracellular side. Residues 12–32 (TADIVGVTLTFCVNIVLLGLL) traverse the membrane as a helical segment. Residues 33-42 (KTRGKNLGTY) lie on the Cytoplasmic side of the membrane. Residues 43-63 (KYLMAFFSVFSIFYAIIEFIL) form a helical membrane-spanning segment. Over 64 to 92 (RPIMHIENTTFFLISRKRFNYSTKLGKIN) the chain is Extracellular. 2 N-linked (GlcNAc...) asparagine glycosylation sites follow: asparagine 71 and asparagine 83. A helical transmembrane segment spans residues 93-113 (SAFYCACFATSFVVSGVHFVY). Residues 114–131 (RYFATCKPNLLRLFNLPT) lie on the Cytoplasmic side of the membrane. The chain crosses the membrane as a helical span at residues 132–152 (LLLWPLGCSVPVTMWASVSYF). At 153–201 (LYPDTEYTEAAVTNVLNNHYNWIKKENVSYIAYVYYQYENGVRHIYLKN) the chain is on the extracellular side. A glycan (N-linked (GlcNAc...) asparagine) is linked at asparagine 179. Residues 202–222 (LLGCFVHYFVMSMTFVVMFYC) traverse the membrane as a helical segment. Residues 223 to 254 (GYATWKTMNEHKDVSDRTRALQKQLFKALVLQ) lie on the Cytoplasmic side of the membrane. The helical transmembrane segment at 255 to 275 (TLIPTIFMYAPTGVMFIAPFF) threads the bilayer. Topologically, residues 276 to 284 (DVNLNANAN) are extracellular. Residues 285–305 (FIVFCSFLYPGLDPLILILII) traverse the membrane as a helical segment. Over 306-339 (RDFRRTIFNFLCGKKNSVDESRSTTRANLSQVPT) the chain is Cytoplasmic.

It belongs to the nematode receptor-like protein str family. Interacts with odr-4. Strongly expressed in the sensory cilia of AWA olfactory neurons, and at low levels in the CEP neurons.

Its subcellular location is the cell projection. It is found in the cilium membrane. Functionally, an odorant receptor which affects chemotaxis to the volatile odorant diacetyl. Specifies AWA neuronal cell fate via the odr-7 pathway. This is Serpentine receptor class r-10 from Caenorhabditis elegans.